The following is a 736-amino-acid chain: Ethylene receptor 2 (736 aa).

Transmembrane regions (helical) follow at residues 22–42, 53–73, and 94–114; these read ISDF…VYFV, VLVQ…INLW, and AAVS…LLSV. The Cu cation site is built by Cys-64 and His-68. In terms of domain architecture, GAF spans 157-305; it reads DRHTILKTTL…VVADQVAVAL (149 aa). A Histidine kinase domain is found at 348 to 585; the sequence is VMNHEMRTPM…TAIFIVKLGI (238 aa). His-351 is modified (phosphohistidine; by autocatalysis). In terms of domain architecture, Response regulatory spans 613 to 730; the sequence is KVLVMDDNGF…KMRSVLSGLL (118 aa). Asp-661 bears the 4-aspartylphosphate mark.

It belongs to the ethylene receptor family. In terms of assembly, homodimer; disulfide-linked. Cu cation is required as a cofactor. Post-translationally, activation probably requires a transfer of a phosphate group between a His in the transmitter domain and an Asp of the receiver domain. Leaves, flowers and fruits.

It is found in the endoplasmic reticulum membrane. It carries out the reaction ATP + protein L-histidine = ADP + protein N-phospho-L-histidine.. In terms of biological role, may act early in the ethylene signal transduction pathway, possibly as an ethylene receptor, or as a regulator of the pathway. The sequence is that of Ethylene receptor 2 (ETR2) from Solanum lycopersicum (Tomato).